Consider the following 235-residue polypeptide: MLTLIDPNDERQAFPPPDAALKEPNGLLAVGGSLSVARLERAYRRGIFPWYGEGDPILWWSPDPRLVLFPEKLRISRSLRKTLRRRLFRFSFDRAFRAVITACAERREKSEGTWLTADMQSAYLAFHHAGFAHSFEAWQDGALVGGLYGVAMGRIFYGESMFHRVTDASKAALAFAVGCLSHWGYRMIDCQVYSSHLVSLGASTIPRSEFQALVSEYSETSVDPEAWKHAPGDFL.

It belongs to the L/F-transferase family.

It is found in the cytoplasm. It catalyses the reaction N-terminal L-lysyl-[protein] + L-leucyl-tRNA(Leu) = N-terminal L-leucyl-L-lysyl-[protein] + tRNA(Leu) + H(+). The enzyme catalyses N-terminal L-arginyl-[protein] + L-leucyl-tRNA(Leu) = N-terminal L-leucyl-L-arginyl-[protein] + tRNA(Leu) + H(+). It carries out the reaction L-phenylalanyl-tRNA(Phe) + an N-terminal L-alpha-aminoacyl-[protein] = an N-terminal L-phenylalanyl-L-alpha-aminoacyl-[protein] + tRNA(Phe). Functions in the N-end rule pathway of protein degradation where it conjugates Leu, Phe and, less efficiently, Met from aminoacyl-tRNAs to the N-termini of proteins containing an N-terminal arginine or lysine. This is Leucyl/phenylalanyl-tRNA--protein transferase from Methylococcus capsulatus (strain ATCC 33009 / NCIMB 11132 / Bath).